The primary structure comprises 155 residues: SsrA-binding protein (155 aa).

It belongs to the SmpB family.

The protein localises to the cytoplasm. Required for rescue of stalled ribosomes mediated by trans-translation. Binds to transfer-messenger RNA (tmRNA), required for stable association of tmRNA with ribosomes. tmRNA and SmpB together mimic tRNA shape, replacing the anticodon stem-loop with SmpB. tmRNA is encoded by the ssrA gene; the 2 termini fold to resemble tRNA(Ala) and it encodes a 'tag peptide', a short internal open reading frame. During trans-translation Ala-aminoacylated tmRNA acts like a tRNA, entering the A-site of stalled ribosomes, displacing the stalled mRNA. The ribosome then switches to translate the ORF on the tmRNA; the nascent peptide is terminated with the 'tag peptide' encoded by the tmRNA and targeted for degradation. The ribosome is freed to recommence translation, which seems to be the essential function of trans-translation. This chain is SsrA-binding protein, found in Bordetella bronchiseptica (strain ATCC BAA-588 / NCTC 13252 / RB50) (Alcaligenes bronchisepticus).